A 414-amino-acid polypeptide reads, in one-letter code: Pre-mRNA-processing protein 45 (414 aa).

2 disordered regions span residues 128–159 (ESKRQDPLQPSRQKNTSSKIVLPEDDETDTPI) and 264–292 (RSKIQTQSSAVKKRGSRFEGGRHQNKKIK). Over residues 135-146 (LQPSRQKNTSSK) the composition is skewed to polar residues.

The protein belongs to the SNW family. As to quaternary structure, associated with the spliceosome.

The protein localises to the nucleus. Functionally, involved in pre-mRNA splicing. The chain is Pre-mRNA-processing protein 45 (PRP45) from Candida glabrata (strain ATCC 2001 / BCRC 20586 / JCM 3761 / NBRC 0622 / NRRL Y-65 / CBS 138) (Yeast).